A 444-amino-acid chain; its full sequence is Methylenetetrahydrofolate--tRNA-(uracil-5-)-methyltransferase TrmFO (444 aa).

10–15 is an FAD binding site; the sequence is GAGLAG.

This sequence belongs to the MnmG family. TrmFO subfamily. FAD serves as cofactor.

Its subcellular location is the cytoplasm. The catalysed reaction is uridine(54) in tRNA + (6R)-5,10-methylene-5,6,7,8-tetrahydrofolate + NADH + H(+) = 5-methyluridine(54) in tRNA + (6S)-5,6,7,8-tetrahydrofolate + NAD(+). It carries out the reaction uridine(54) in tRNA + (6R)-5,10-methylene-5,6,7,8-tetrahydrofolate + NADPH + H(+) = 5-methyluridine(54) in tRNA + (6S)-5,6,7,8-tetrahydrofolate + NADP(+). Its function is as follows. Catalyzes the folate-dependent formation of 5-methyl-uridine at position 54 (M-5-U54) in all tRNAs. In Streptococcus mutans serotype c (strain ATCC 700610 / UA159), this protein is Methylenetetrahydrofolate--tRNA-(uracil-5-)-methyltransferase TrmFO.